A 737-amino-acid polypeptide reads, in one-letter code: Delta and Notch-like epidermal growth factor-related receptor (737 aa).

Residues 1 to 25 (MPPRRAQAPGAPLLPVLALLPLLLG) form the signal peptide. Residues 26–640 (AGPQSGCLAS…LTNMPRHSLY (615 aa)) lie on the Extracellular side of the membrane. EGF-like domains lie at 44 to 92 (APGP…TYCQ) and 94 to 133 (VADP…LNCE). The segment at 44 to 133 (APGPCASQPC…NDGYEGLNCE (90 aa)) is interaction with NOTCH1. Disulfide bonds link C48–C59, C53–C80, C82–C91, C98–C108, C103–C121, and C123–C132. N204 is a glycosylation site (N-linked (GlcNAc...) asparagine). EGF-like domains lie at 309–348 (PGDS…TFCE), 349–390 (EFDA…ELCQ), 392–428 (KIDY…SACE), 430–466 (KVDP…PTCA), and 468–503 (LVDF…LYCE). Disulfide bonds link C319–C336, C338–C347, C353–C364, C358–C378, C380–C389, C396–C407, C401–C416, C418–C427, C434–C445, C439–C454, C456–C465, C472–C482, C477–C491, C493–C502, C509–C520, C514–C529, C531–C540, C547–C558, C552–C567, C569–C578, C585–C596, C590–C605, and C607–C616. An EGF-like 8; calcium-binding domain is found at 505-541 (EYNECLSAPCLNAATCRDLINGYECVCLAEYKGTHCE). One can recognise an EGF-like 9 domain in the interval 543–579 (YKDPCANISCLNGGTCDSEGLNGTCICAPGFTGEECD). Residue N564 is glycosylated (N-linked (GlcNAc...) asparagine). Residues 581 to 617 (DINECDSNPCHHAGTCLDQPNGYTCHCPHGWVGANCE) enclose the EGF-like 10; calcium-binding domain. A helical membrane pass occupies residues 641–661 (IIIGALCVAFILMLIILIVGI). Topologically, residues 662–737 (CRISRIEYQG…LVTLIKTKDL (76 aa)) are cytoplasmic. The interaction with AP1G1 and somatodendritic targeting stretch occupies residues 677 to 680 (YEEF). Position 685 is a phosphoserine (S685). The residue at position 711 (Y711) is a Phosphotyrosine. A Phosphothreonine modification is found at T714. Y721 is subject to Phosphotyrosine. A Phosphoserine modification is found at S722.

Interacts with AP1G1. Interacts with NOTCH1. In terms of processing, N-glycosylated. As to expression, specifically expressed in brain neurons (at protein level).

Its subcellular location is the cell membrane. Its function is as follows. Mediates neuron-glia interaction during astrocytogenesis. May promote differentiation of Bergmann glia during cerebellar development by activating DELTEX-dependent NOTCH1 signaling. This is Delta and Notch-like epidermal growth factor-related receptor (Dner) from Mus musculus (Mouse).